Here is a 278-residue protein sequence, read N- to C-terminus: Dermonecrotic toxin LspiSicTox-betaIE2iii (278 aa).

Histidine 5 is a catalytic residue. 2 residues coordinate Mg(2+): glutamate 25 and aspartate 27. The Nucleophile role is filled by histidine 41. 2 disulfide bridges follow: cysteine 45–cysteine 51 and cysteine 47–cysteine 190. Aspartate 85 provides a ligand contact to Mg(2+).

Belongs to the arthropod phospholipase D family. Class II subfamily. It depends on Mg(2+) as a cofactor. Expressed by the venom gland.

The protein resides in the secreted. It carries out the reaction an N-(acyl)-sphingosylphosphocholine = an N-(acyl)-sphingosyl-1,3-cyclic phosphate + choline. The enzyme catalyses an N-(acyl)-sphingosylphosphoethanolamine = an N-(acyl)-sphingosyl-1,3-cyclic phosphate + ethanolamine. It catalyses the reaction a 1-acyl-sn-glycero-3-phosphocholine = a 1-acyl-sn-glycero-2,3-cyclic phosphate + choline. The catalysed reaction is a 1-acyl-sn-glycero-3-phosphoethanolamine = a 1-acyl-sn-glycero-2,3-cyclic phosphate + ethanolamine. Its function is as follows. Dermonecrotic toxins cleave the phosphodiester linkage between the phosphate and headgroup of certain phospholipids (sphingolipid and lysolipid substrates), forming an alcohol (often choline) and a cyclic phosphate. This toxin acts on sphingomyelin (SM). It may also act on ceramide phosphoethanolamine (CPE), lysophosphatidylcholine (LPC) and lysophosphatidylethanolamine (LPE), but not on lysophosphatidylserine (LPS), and lysophosphatidylglycerol (LPG). It acts by transphosphatidylation, releasing exclusively cyclic phosphate products as second products. Induces dermonecrosis, hemolysis, increased vascular permeability, edema, inflammatory response, and platelet aggregation. The chain is Dermonecrotic toxin LspiSicTox-betaIE2iii from Loxosceles spinulosa (Recluse spider).